The primary structure comprises 342 residues: Replication factor C subunit 3 (342 aa).

63–70 lines the ATP pocket; that stretch reads GPPGTGKT.

Belongs to the activator 1 small subunits family. As to quaternary structure, heteropentamer of subunits rfc1, rfc2, rfc3, rfc4 and rfc5 that forms a complex (RFC) with PCNA in the presence of ATP. Two other complexes exist where rfc1 can be replaced by either ctf18 or elg1 to form the ctf18-RFC or the elg1-RFC complexes respectively.

The protein localises to the nucleus. The elongation of primed DNA templates by DNA polymerase delta and epsilon requires the action of the accessory proteins PCNA and activator 1. Subunit 3 binds ATP. Also involved in replication and DNA damage checkpoint controls, probably functioning as a checkpoint sensor. The chain is Replication factor C subunit 3 (rfc3) from Schizosaccharomyces pombe (strain 972 / ATCC 24843) (Fission yeast).